Here is a 107-residue protein sequence, read N- to C-terminus: Large ribosomal subunit protein uL24 (107 aa).

It belongs to the universal ribosomal protein uL24 family. As to quaternary structure, part of the 50S ribosomal subunit.

Its function is as follows. One of two assembly initiator proteins, it binds directly to the 5'-end of the 23S rRNA, where it nucleates assembly of the 50S subunit. In terms of biological role, one of the proteins that surrounds the polypeptide exit tunnel on the outside of the subunit. The polypeptide is Large ribosomal subunit protein uL24 (Gluconacetobacter diazotrophicus (strain ATCC 49037 / DSM 5601 / CCUG 37298 / CIP 103539 / LMG 7603 / PAl5)).